We begin with the raw amino-acid sequence, 134 residues long: Histone H2A (134 aa).

Gly residues predominate over residues 1-10 (MTGGKSGGKA). Positions 1–26 (MTGGKSGGKASGSKSSAQSRSSKAGL) are disordered. Lys-5 and Lys-9 each carry N6-acetyllysine. The segment covering 11–25 (SGSKSSAQSRSSKAG) has biased composition (low complexity). Gln-107 bears the N5-methylglutamine mark. At Ser-131 the chain carries Phosphoserine. The short motif at 131–132 (SQ) is the [ST]-Q motif element.

The protein belongs to the histone H2A family. In terms of assembly, the nucleosome is a histone octamer containing two molecules each of H2A, H2B, H3 and H4 assembled in one H3-H4 heterotetramer and two H2A-H2B heterodimers. The octamer wraps approximately 147 bp of DNA. In terms of processing, phosphorylated to form H2AS128ph (gamma-H2A) in response to DNA double-strand breaks (DSBs) generated by exogenous genotoxic agents and by stalled replication forks. Phosphorylation is dependent on the DNA damage checkpoint kinases MEC1/ATR and TEL1/ATM, spreads on either side of a detected DSB site and may mark the surrounding chromatin for recruitment of proteins required for DNA damage signaling and repair. Gamma-H2A is removed from the DNA prior to the strand invasion-primer extension step of the repair process and subsequently dephosphorylated. Dephosphorylation is necessary for efficient recovery from the DNA damage checkpoint. Acetylated by ESA1 to form H2AK4ac and H2AK7ac.

It localises to the nucleus. Its subcellular location is the chromosome. Functionally, core component of nucleosome which plays a central role in DNA double strand break (DSB) repair. Nucleosomes wrap and compact DNA into chromatin, limiting DNA accessibility to the cellular machineries which require DNA as a template. Histones thereby play a central role in transcription regulation, DNA repair, DNA replication and chromosomal stability. DNA accessibility is regulated via a complex set of post-translational modifications of histones, also called histone code, and nucleosome remodeling. The protein is Histone H2A (HTA1) of Phaeosphaeria nodorum (strain SN15 / ATCC MYA-4574 / FGSC 10173) (Glume blotch fungus).